The primary structure comprises 351 residues: MGSLERSKKKAQVWKKAVIHFSLCFVMGFFTGFAPAGKASFFSNFETTSYTSTKSPIPPQPFENATYTQHSLLNRTLINSQSQAPAPAESREAEGETRSLSEKEDENQVKVTPRGLVIVVTPIITKDRYKNVLLRRMANTLRLVPPPLLWIVVEKHSDGEEKSSSTMLRKTGIMYRRIVFKEDFTSLESELDHQRNLALRHIEHHKLSGIVHFAGLNNIYDLDFFVKIRDIEVFGTWPMALLSANRKRVVVEGPVCESSQVLGWHLRKINNETETKPPIHISSFAFNSSILWDPERWGRPSSVEGTKQDSIKYVKQVVLEDDTKLKGLPAQDCSKIMLWRLKFPTRTRLST.

Over 1–16 the chain is Cytoplasmic; it reads MGSLERSKKKAQVWKK. Residues 17–36 traverse the membrane as a helical; Signal-anchor for type II membrane protein segment; it reads AVIHFSLCFVMGFFTGFAPA. The Lumenal segment spans residues 37–351; the sequence is GKASFFSNFE…KFPTRTRLST (315 aa). Residues asparagine 64 and asparagine 74 are each glycosylated (N-linked (GlcNAc...) asparagine). The disordered stretch occupies residues 80-107; sequence SQSQAPAPAESREAEGETRSLSEKEDEN. Residues 89-107 show a composition bias toward basic and acidic residues; that stretch reads ESREAEGETRSLSEKEDEN. Residues asparagine 271 and asparagine 287 are each glycosylated (N-linked (GlcNAc...) asparagine).

The protein belongs to the glycosyltransferase 43 family. In terms of tissue distribution, expressed in developing interfascicular fibers, primary and secondary xylem in stems and developing secondary xylem in roots.

Its subcellular location is the golgi apparatus membrane. The catalysed reaction is [(1-&gt;4)-beta-D-xylan](n) + UDP-alpha-D-xylose = [(1-&gt;4)-beta-D-xylan](n+1) + UDP + H(+). In terms of biological role, involved in the synthesis of the hemicellulose glucuronoxylan, a major component of secondary cell walls. Xylan xylosyltransferase that acts cooperatively with IRX14 to achieve the successive addition of xylosyl residues during xylan backbone elongation. The sequence is that of Beta-1,4-xylosyltransferase IRX9 from Arabidopsis thaliana (Mouse-ear cress).